The following is a 340-amino-acid chain: MYG1 protein C27H6.8 (340 aa).

It belongs to the MYG1 family.

The sequence is that of MYG1 protein C27H6.8 from Caenorhabditis elegans.